The chain runs to 230 residues: Cell division ATP-binding protein FtsE (230 aa).

The region spanning 3-228 (ITLDHVTKQY…RDEQRGVYGM (226 aa)) is the ABC transporter domain. 37–44 (GPSGSGKS) provides a ligand contact to ATP.

It belongs to the ABC transporter superfamily. In terms of assembly, homodimer. Forms a membrane-associated complex with FtsX.

Its subcellular location is the cell membrane. In terms of biological role, part of the ABC transporter FtsEX involved in cellular division. Has ATPase activity. The protein is Cell division ATP-binding protein FtsE of Mycobacterium tuberculosis (strain ATCC 25618 / H37Rv).